The sequence spans 381 residues: Glycerol-3-phosphate dehydrogenase [NAD(+)] (381 aa).

The disordered stretch occupies residues 1 to 27; it reads MTAMDRLDHVSNQLAAKRQKKNPEGKP. Residues 34 to 39, F66, and F122 each bind NAD(+); that span reads GSGNWG. K145 is a substrate binding site. NAD(+) is bound at residue A178. K238 functions as the Proton acceptor in the catalytic mechanism. 2 residues coordinate NAD(+): R303 and Q332. Substrate is bound at residue 303-304; the sequence is RN.

The protein belongs to the NAD-dependent glycerol-3-phosphate dehydrogenase family.

It carries out the reaction sn-glycerol 3-phosphate + NAD(+) = dihydroxyacetone phosphate + NADH + H(+). The polypeptide is Glycerol-3-phosphate dehydrogenase [NAD(+)] (GPD) (Pichia angusta (Yeast)).